Here is a 110-residue protein sequence, read N- to C-terminus: U1-lycotoxin-Ls1ee (110 aa).

An N-terminal signal peptide occupies residues 1–20 (MKFVLLFGVLLVTLFSYSSA). Residues 21–44 (EMLDDFDQADEDELLSLIEKEEAR) constitute a propeptide that is removed on maturation. Disulfide bonds link cysteine 47/cysteine 62, cysteine 54/cysteine 71, cysteine 61/cysteine 89, and cysteine 73/cysteine 87.

It belongs to the neurotoxin 19 (CSTX) family. 03 subfamily. In terms of tissue distribution, expressed by the venom gland.

The protein resides in the secreted. This chain is U1-lycotoxin-Ls1ee, found in Lycosa singoriensis (Wolf spider).